A 419-amino-acid polypeptide reads, in one-letter code: Synaptotagmin-2 (419 aa).

Residues 1–62 (MRNIFKRNQE…NEINKIPLPP (62 aa)) lie on the Vesicular side of the membrane. A disordered region spans residues 16–39 (ATTTATMPIGPVDNSTESGGAGES). N-linked (GlcNAc...) asparagine glycosylation is present at Asn29. The helical transmembrane segment at 63 to 83 (WALIAIAVVAGLLLLTCCFCI) threads the bilayer. Topologically, residues 84-419 (CKKCCCKKKK…EVDALLGKNK (336 aa)) are cytoplasmic. The tract at residues 99–138 (GKGMKNAMNMKDMKGGQDDDDAETGLTEGEGEGEEEKEPE) is disordered. Positions 116 to 136 (DDDDAETGLTEGEGEGEEEKE) are enriched in acidic residues. Thr122 and Thr125 each carry phosphothreonine. Residues 133–379 (EEKEPENLGK…AIGKIFVGSN (247 aa)) are phospholipid binding. C2 domains are found at residues 139 to 258 (NLGK…EEWR) and 270 to 403 (KLGD…AQWH). Leu169, Asp170, and Asp176 together coordinate Ca(2+). Thr199 bears the Phosphothreonine mark. Tyr227 carries the phosphotyrosine modification. Residues Asp228, Phe229, Asp230, Ser233, Lys234, Asp236, Asp301, Asp307, Asp361, and Asp363 each contribute to the Ca(2+) site. Thr383 carries the post-translational modification Phosphothreonine.

The protein belongs to the synaptotagmin family. Homotetramer. Heterodimer; heterodimerizes with SYT1 in presence of calcium. Interacts with STON2. Interacts with SCAMP5. Interacts with PRRT2. Ca(2+) is required as a cofactor. In terms of processing, phosphorylation at Thr-199 by WNK1, changes the calcium requirement for SYT2-binding to phospholipid membranes. As to expression, expressed at the neuromuscular junction. Expressed in melanocytes.

It is found in the cytoplasmic vesicle. It localises to the secretory vesicle. The protein localises to the synaptic vesicle membrane. Its subcellular location is the chromaffin granule membrane. The protein resides in the cytoplasm. Its function is as follows. Exhibits calcium-dependent phospholipid and inositol polyphosphate binding properties. May have a regulatory role in the membrane interactions during trafficking of synaptic vesicles at the active zone of the synapse. Plays a role in dendrite formation by melanocytes. This is Synaptotagmin-2 from Homo sapiens (Human).